Consider the following 358-residue polypeptide: G-protein coupled receptor 20 (358 aa).

Residues 1 to 48 (MPSVSPAGPSAGAVPNATAVTTVRTNASGLEVPLFHLFARLDEELHGT) are Extracellular-facing. 2 N-linked (GlcNAc...) asparagine glycosylation sites follow: N16 and N26. A helical membrane pass occupies residues 49–69 (FPGLWLALMAVHGAIFLAGLV). Over 70 to 86 (LNGLALYVFCCRTRAKT) the chain is Cytoplasmic. The helical transmembrane segment at 87–107 (PSVIYTINLVVTDLLVGLSLP) threads the bilayer. Over 108–125 (TRFAVYYGARGCLRCAFP) the chain is Extracellular. Residues 126 to 146 (HVLGYFLNMHCSILFLTCICV) form a helical membrane-spanning segment. Over 147–168 (DRYLAIVRPEGSRRCRQPACAR) the chain is Cytoplasmic. A helical transmembrane segment spans residues 169–189 (AVCAFVWLAAGAVTLSVLGVT). The Extracellular segment spans residues 190–196 (GSRPCCR). The chain crosses the membrane as a helical span at residues 197–217 (VFALTVLEFLLPLLVISVFTG). Residues 218–238 (RIMCALSRPGLLHQGRQRRVR) lie on the Cytoplasmic side of the membrane. A helical transmembrane segment spans residues 239–259 (AMQLLLTVLIIFLVCFTPFHA). Topologically, residues 260-275 (RQVAVALWPDMPHHTS) are extracellular. The chain crosses the membrane as a helical span at residues 276-296 (LVVYHVAVTLSSLNSCMDPIV). At 297-358 (YCFVTSGFQA…TQALANGPEA (62 aa)) the chain is on the cytoplasmic side. The disordered stretch occupies residues 315–339 (HGEREPSSGDVVSMHRSSKGSGRHH). The segment covering 330 to 339 (RSSKGSGRHH) has biased composition (basic residues).

The protein belongs to the G-protein coupled receptor 1 family. In terms of tissue distribution, ubiquitous with highest levels in intestinal tissues. In the brain detected in thalamus, putamen, and caudate, but not in frontal cortex, pons and hypothalamus.

It is found in the cell membrane. Orphan receptor with constitutive G(i) signaling activity that activate cyclic AMP. The sequence is that of G-protein coupled receptor 20 (GPR20) from Homo sapiens (Human).